The primary structure comprises 210 residues: Cytidylate kinase (210 aa).

Residue 7-15 (GPAASGKGT) participates in ATP binding.

This sequence belongs to the cytidylate kinase family. Type 1 subfamily.

It is found in the cytoplasm. The catalysed reaction is CMP + ATP = CDP + ADP. It catalyses the reaction dCMP + ATP = dCDP + ADP. The sequence is that of Cytidylate kinase from Methylobacterium sp. (strain 4-46).